The sequence spans 703 residues: Heat shock protein 75 kDa, mitochondrial (703 aa).

Residues 1–56 (MARELRMLLLWGRRLRAPALAAACGGKPVLCPWRPPAQSWGPPRSLASSFHVGRPF) constitute a mitochondrion transit peptide. 2 residues coordinate ATP: asparagine 118 and aspartate 157. Phosphoserine is present on serine 169. Asparagine 170 provides a ligand contact to ATP. A Phosphothreonine modification is found at threonine 173. ATP contacts are provided by phenylalanine 204 and arginine 401. Lysine 423, lysine 430, and lysine 465 each carry N6-acetyllysine. Threonine 493 carries the post-translational modification Phosphothreonine.

This sequence belongs to the heat shock protein 90 family. As to quaternary structure, binds to the intracellular domain of tumor necrosis factor type 1 receptor. Binds to RB1. Interacts with SRC. Interacts with SDHA.

It is found in the mitochondrion. The protein localises to the mitochondrion inner membrane. It localises to the mitochondrion matrix. Chaperone that expresses an ATPase activity. Involved in maintaining mitochondrial function and polarization, downstream of PINK1 and mitochondrial complex I. Is a negative regulator of mitochondrial respiration able to modulate the balance between oxidative phosphorylation and aerobic glycolysis. The impact of TRAP1 on mitochondrial respiration is probably mediated by modulation of mitochondrial SRC and inhibition of SDHA. This chain is Heat shock protein 75 kDa, mitochondrial (TRAP1), found in Bos taurus (Bovine).